The chain runs to 109 residues: Small ribosomal subunit protein uS10 (109 aa).

Belongs to the universal ribosomal protein uS10 family. Part of the 30S ribosomal subunit.

Its function is as follows. Involved in the binding of tRNA to the ribosomes. In Wolbachia pipientis wMel, this protein is Small ribosomal subunit protein uS10.